Here is a 746-residue protein sequence, read N- to C-terminus: Double-stranded RNA-specific editase B2 (746 aa).

Disordered stretches follow at residues 1-36 (MASV…KDKV) and 50-105 (SPGT…PLEE). Residues 20–34 (CKSKRRRRRRSKRKD) are compositionally biased toward basic residues. Residues 23–35 (KRRRRRRSKRKDK) are R-domain (ssRNA-binding). 2 consecutive DRBM domains span residues 126-192 (TPKN…SFVQ) and 284-348 (NPVV…ALFD). The A to I editase domain maps to 415–742 (VLSSGTKCIS…VRKPPEQDQF (328 aa)). H439 serves as a coordination point for Zn(2+). Residue E441 is the Proton donor of the active site. Positions 497 and 562 each coordinate Zn(2+).

In terms of tissue distribution, brain specific.

Its subcellular location is the nucleus. Its function is as follows. Lacks editing activity. It prevents the binding of other ADAR enzymes to targets in vitro, and decreases the efficiency of these enzymes. Capable of binding to dsRNA but also to ssRNA. The polypeptide is Double-stranded RNA-specific editase B2 (Adarb2) (Rattus norvegicus (Rat)).